The sequence spans 684 residues: MDKFIQSFSHQYLDSSSSLKLTARRKRKLTILGLFLFSLISLMIIISYSNNNILPGLSGISISSTFSDYYSNPKQQNKFEQQIQDHQTTKKGKRTIIFPNNFNHVHDHKGSYMMKDSELVKYYVETMEQALDPEDLIYRNRFTYKLPNIPYTEQKIEMFSDGGGGGGDTSDSNTDMCPKLSTTIKVEASPAMNKNGDLKKILKTFLQEDSFYYRELSPFFPDLKKHFDEDTIDKHWYQFIGSTVWLEQYGVHLMVSRIIYTEKDQGSPKFSLAYLQVFDRNWKELDNVELIVPDPENISTTNNKNKNKKPYGYKSVLYPTIAPIPVYHNSKQTGGRFYGIEDPRIVLIKTRHGYEEPVLIYNSHHRKISEKHFDNDQEGKINFNNYRSLFIGWIWQTQLGKIHLEELPNNEFKKNEYIKIKEFVKPNNNRGRTEKNWALFINYNQRLNQGFDSHVYFANQLKNLKILKCSILNDNDDDCEWEFQMDDYEDAGVLHGGTELININQLLHQYDYPELNSIKDLIPNGREYWVGFARASLKNCGCGSRMYRPNLIVLMKDGKNYKFAYVSSFVGLGIEILPWYLDKGLCEHYNLIIPNGISSWTIEKDLHQKEKDKQVMDYMAFTISRRDATVDVVYVKGLLKALFTDSSSSKHLLAVEQTGFKSVTNVDCALKNSEKFCKIYGETF.

The Cytoplasmic segment spans residues 1-28 (MDKFIQSFSHQYLDSSSSLKLTARRKRK). The chain crosses the membrane as a helical span at residues 29–49 (LTILGLFLFSLISLMIIISYS). Over 50-684 (NNNILPGLSG…KFCKIYGETF (635 aa)) the chain is Extracellular. The N-linked (GlcNAc...) asparagine glycan is linked to asparagine 297.

The protein belongs to the BMT family.

It localises to the membrane. Functionally, beta-mannosyltransferase involved in cell wall biosynthesis. Required for addition of the first beta-mannose residue to acid-stable fraction of cell wall phosphopeptidomannan. Plays a key role in reducing host inflammatory response. This chain is Beta-mannosyltransferase 1 (BMT1), found in Candida albicans (strain SC5314 / ATCC MYA-2876) (Yeast).